The sequence spans 199 residues: Probable thymidylate kinase (199 aa).

Residue 9–16 (GIDGCGKT) coordinates ATP.

This sequence belongs to the thymidylate kinase family.

It carries out the reaction dTMP + ATP = dTDP + ADP. This chain is Probable thymidylate kinase, found in Methanococcus maripaludis (strain C7 / ATCC BAA-1331).